The chain runs to 585 residues: Arginine--tRNA ligase (585 aa).

A 'HIGH' region motif is present at residues 131-141; that stretch reads ANPTGPMHVGH.

Belongs to the class-I aminoacyl-tRNA synthetase family. In terms of assembly, monomer.

The protein resides in the cytoplasm. The enzyme catalyses tRNA(Arg) + L-arginine + ATP = L-arginyl-tRNA(Arg) + AMP + diphosphate. The sequence is that of Arginine--tRNA ligase from Bartonella quintana (strain Toulouse) (Rochalimaea quintana).